A 78-amino-acid polypeptide reads, in one-letter code: U5-ctenitoxin-Pk1a (78 aa).

7 cysteine pairs are disulfide-bonded: cysteine 6-cysteine 23, cysteine 13-cysteine 29, cysteine 20-cysteine 52, cysteine 22-cysteine 40, cysteine 31-cysteine 38, cysteine 58-cysteine 73, and cysteine 69-cysteine 77.

Expressed by the venom gland.

It is found in the secreted. Functionally, lethal neurotoxin. Causes spastic paralysis and death in mice in 4-6 minutes after intracerebroventricular injection at dose levels of 1.5 ug per mouse. In Phoneutria keyserlingi (Brazilian wandering spider), this protein is U5-ctenitoxin-Pk1a.